Reading from the N-terminus, the 236-residue chain is UPF0502 protein BceJ2315_62050 (236 aa).

Belongs to the UPF0502 family.

In Burkholderia cenocepacia (strain ATCC BAA-245 / DSM 16553 / LMG 16656 / NCTC 13227 / J2315 / CF5610) (Burkholderia cepacia (strain J2315)), this protein is UPF0502 protein BceJ2315_62050.